The sequence spans 981 residues: Rab3 GTPase-activating protein catalytic subunit (981 aa).

Phosphoserine is present on residues Ser83, Ser379, Ser536, Ser579, Ser581, and Ser590. Positions 532–558 are disordered; it reads GKKTSLSDSTTSAYPGDAGKTGGQLGL. A disordered region spans residues 591-614; that stretch reads DTEDLKGNGQESGKKGGPKEMANL. At Ser664 the chain carries Phosphoserine.

The protein belongs to the Rab3-GAP catalytic subunit family. As to quaternary structure, the Rab3 GTPase-activating complex is a heterodimer composed of Rab3gap1 and Rab3gap2. The Rab3 GTPase-activating complex interacts with DMXL2. Interacts with LMAN1. In terms of tissue distribution, in the eye, it is highly expressed within the lens, particularly in the anterior lens epithelium and in a ring corresponding to the equatorial region where anterior cells are differentiating into lens fibers. Also highly expressed in the retina.

Its subcellular location is the cytoplasm. The protein resides in the endoplasmic reticulum. It is found in the golgi apparatus. The protein localises to the cis-Golgi network. Functionally, catalytic subunit of the Rab3 GTPase-activating (Rab3GAP) complex composed of RAB3GAP1 and RAB3GAP2, which has GTPase-activating protein (GAP) activity towards various Rab3 subfamily members (RAB3A, RAB3B, RAB3C and RAB3D), RAB5A and RAB43, and guanine nucleotide exchange factor (GEF) activity towards RAB18. As part of the Rab3GAP complex, acts as a GAP for Rab3 proteins by converting active RAB3-GTP to the inactive form RAB3-GDP. Rab3 proteins are involved in regulated exocytosis of neurotransmitters and hormones. The Rab3GAP complex, acts as a GEF for RAB18 by promoting the conversion of inactive RAB18-GDP to the active form RAB18-GTP. Recruits and stabilizes RAB18 at the cis-Golgi membrane where RAB18 is most likely activated. Also involved in RAB18 recruitment at the endoplasmic reticulum (ER) membrane where it maintains proper ER structure. Required for normal eye and brain development. May participate in neurodevelopmental processes such as proliferation, migration and differentiation before synapse formation, and non-synaptic vesicular release of neurotransmitters. The protein is Rab3 GTPase-activating protein catalytic subunit of Mus musculus (Mouse).